The following is a 597-amino-acid chain: Elongation factor 4 (597 aa).

One can recognise a tr-type G domain in the interval 2 to 184; sequence KHIRNFSIIA…TIVKSIPAPE (183 aa). GTP contacts are provided by residues 14 to 19 and 131 to 134; these read DHGKST and NKID.

Belongs to the TRAFAC class translation factor GTPase superfamily. Classic translation factor GTPase family. LepA subfamily.

The protein localises to the cell inner membrane. The catalysed reaction is GTP + H2O = GDP + phosphate + H(+). In terms of biological role, required for accurate and efficient protein synthesis under certain stress conditions. May act as a fidelity factor of the translation reaction, by catalyzing a one-codon backward translocation of tRNAs on improperly translocated ribosomes. Back-translocation proceeds from a post-translocation (POST) complex to a pre-translocation (PRE) complex, thus giving elongation factor G a second chance to translocate the tRNAs correctly. Binds to ribosomes in a GTP-dependent manner. This chain is Elongation factor 4, found in Aliivibrio fischeri (strain ATCC 700601 / ES114) (Vibrio fischeri).